The chain runs to 208 residues: Thymidylate kinase (208 aa).

10 to 17 (GPDGSGKT) contributes to the ATP binding site.

Belongs to the thymidylate kinase family.

It catalyses the reaction dTMP + ATP = dTDP + ADP. Functionally, phosphorylation of dTMP to form dTDP in both de novo and salvage pathways of dTTP synthesis. This is Thymidylate kinase from Listeria monocytogenes serotype 4a (strain HCC23).